We begin with the raw amino-acid sequence, 309 residues long: Electron transfer flavoprotein subunit alpha (309 aa).

253–281 lines the FAD pocket; sequence LYIAVGISGAIQHLAGMKDSKVIVAINKD.

Belongs to the ETF alpha-subunit/FixB family. As to quaternary structure, heterodimer of an alpha and a beta subunit. FAD serves as cofactor.

Functionally, the electron transfer flavoprotein serves as a specific electron acceptor for other dehydrogenases. It transfers the electrons to the main respiratory chain via ETF-ubiquinone oxidoreductase (ETF dehydrogenase). This Pseudomonas aeruginosa (strain ATCC 15692 / DSM 22644 / CIP 104116 / JCM 14847 / LMG 12228 / 1C / PRS 101 / PAO1) protein is Electron transfer flavoprotein subunit alpha (etfA).